Here is a 387-residue protein sequence, read N- to C-terminus: 3-ketoacyl-CoA thiolase (387 aa).

Catalysis depends on cysteine 91, which acts as the Acyl-thioester intermediate. Active-site proton acceptor residues include histidine 343 and cysteine 373.

The protein belongs to the thiolase-like superfamily. Thiolase family. As to quaternary structure, heterotetramer of two alpha chains (FadB) and two beta chains (FadA).

The protein localises to the cytoplasm. The enzyme catalyses an acyl-CoA + acetyl-CoA = a 3-oxoacyl-CoA + CoA. The protein operates within lipid metabolism; fatty acid beta-oxidation. Catalyzes the final step of fatty acid oxidation in which acetyl-CoA is released and the CoA ester of a fatty acid two carbons shorter is formed. The chain is 3-ketoacyl-CoA thiolase from Aeromonas hydrophila subsp. hydrophila (strain ATCC 7966 / DSM 30187 / BCRC 13018 / CCUG 14551 / JCM 1027 / KCTC 2358 / NCIMB 9240 / NCTC 8049).